The following is a 315-amino-acid chain: Porphobilinogen deaminase (315 aa).

S-(dipyrrolylmethanemethyl)cysteine is present on C242.

This sequence belongs to the HMBS family. Monomer. The cofactor is dipyrromethane.

It catalyses the reaction 4 porphobilinogen + H2O = hydroxymethylbilane + 4 NH4(+). It participates in porphyrin-containing compound metabolism; protoporphyrin-IX biosynthesis; coproporphyrinogen-III from 5-aminolevulinate: step 2/4. Functionally, tetrapolymerization of the monopyrrole PBG into the hydroxymethylbilane pre-uroporphyrinogen in several discrete steps. This is Porphobilinogen deaminase from Syntrophotalea carbinolica (strain DSM 2380 / NBRC 103641 / GraBd1) (Pelobacter carbinolicus).